Reading from the N-terminus, the 577-residue chain is Arginine--tRNA ligase (577 aa).

The short motif at Pro122–His132 is the 'HIGH' region element.

The protein belongs to the class-I aminoacyl-tRNA synthetase family. In terms of assembly, monomer.

It is found in the cytoplasm. It carries out the reaction tRNA(Arg) + L-arginine + ATP = L-arginyl-tRNA(Arg) + AMP + diphosphate. The protein is Arginine--tRNA ligase of Salmonella agona (strain SL483).